The chain runs to 781 residues: Penicillin-binding protein 1B (781 aa).

Residues 151 to 322 (FRLAPKLIAM…SLYNPWRNPQ (172 aa)) are transglycosylase. Glu-188 (proton donor; for transglycosylase activity) is an active-site residue. The interval 415 to 702 (SQLQLKMKNP…ALQIYKDYLN (288 aa)) is transpeptidase. Ser-466 (acyl-ester intermediate; for transpeptidase activity) is an active-site residue. The segment covering 749–768 (ETSSPSLTPTTETETPPQES) has biased composition (low complexity). Residues 749–781 (ETSSPSLTPTTETETPPQESLWDVLDNPNPPAQ) form a disordered region.

It in the N-terminal section; belongs to the glycosyltransferase 51 family. This sequence in the C-terminal section; belongs to the transpeptidase family.

It localises to the cell inner membrane. The catalysed reaction is [GlcNAc-(1-&gt;4)-Mur2Ac(oyl-L-Ala-gamma-D-Glu-L-Lys-D-Ala-D-Ala)](n)-di-trans,octa-cis-undecaprenyl diphosphate + beta-D-GlcNAc-(1-&gt;4)-Mur2Ac(oyl-L-Ala-gamma-D-Glu-L-Lys-D-Ala-D-Ala)-di-trans,octa-cis-undecaprenyl diphosphate = [GlcNAc-(1-&gt;4)-Mur2Ac(oyl-L-Ala-gamma-D-Glu-L-Lys-D-Ala-D-Ala)](n+1)-di-trans,octa-cis-undecaprenyl diphosphate + di-trans,octa-cis-undecaprenyl diphosphate + H(+). The enzyme catalyses Preferential cleavage: (Ac)2-L-Lys-D-Ala-|-D-Ala. Also transpeptidation of peptidyl-alanyl moieties that are N-acyl substituents of D-alanine.. It participates in cell wall biogenesis; peptidoglycan biosynthesis. Functionally, cell wall formation. Synthesis of cross-linked peptidoglycan from the lipid intermediates. The enzyme has a penicillin-insensitive transglycosylase N-terminal domain (formation of linear glycan strands) and a penicillin-sensitive transpeptidase C-terminal domain (cross-linking of the peptide subunits). The polypeptide is Penicillin-binding protein 1B (mrcB) (Haemophilus influenzae (strain ATCC 51907 / DSM 11121 / KW20 / Rd)).